The chain runs to 711 residues: Polyribonucleotide nucleotidyltransferase (711 aa).

D486 and D492 together coordinate Mg(2+). Residues 553–612 (PRIHTIKINPDKIKDVIGKGGSVIRALTEETGTTIEIEDDGTVKIAATDGEKAKHAIRRI) form the KH domain. An S1 motif domain is found at 622–690 (GRVYNGKVTR…RQGRIRLSIK (69 aa)). Positions 689–711 (IKEATEQSQPAAAPEAPAAEQGE) are disordered. Low complexity predominate over residues 694–711 (EQSQPAAAPEAPAAEQGE).

This sequence belongs to the polyribonucleotide nucleotidyltransferase family. As to quaternary structure, component of the RNA degradosome, which is a multiprotein complex involved in RNA processing and mRNA degradation. It depends on Mg(2+) as a cofactor.

Its subcellular location is the cytoplasm. It carries out the reaction RNA(n+1) + phosphate = RNA(n) + a ribonucleoside 5'-diphosphate. Functionally, involved in mRNA degradation. Catalyzes the phosphorolysis of single-stranded polyribonucleotides processively in the 3'- to 5'-direction. The polypeptide is Polyribonucleotide nucleotidyltransferase (Escherichia coli O6:K15:H31 (strain 536 / UPEC)).